Here is a 295-residue protein sequence, read N- to C-terminus: 4-hydroxy-tetrahydrodipicolinate synthase (295 aa).

Thr-48 contacts pyruvate. Tyr-136 acts as the Proton donor/acceptor in catalysis. The active-site Schiff-base intermediate with substrate is Lys-164. Ile-206 lines the pyruvate pocket.

It belongs to the DapA family. In terms of assembly, homotetramer; dimer of dimers.

The protein resides in the cytoplasm. The enzyme catalyses L-aspartate 4-semialdehyde + pyruvate = (2S,4S)-4-hydroxy-2,3,4,5-tetrahydrodipicolinate + H2O + H(+). Its pathway is amino-acid biosynthesis; L-lysine biosynthesis via DAP pathway; (S)-tetrahydrodipicolinate from L-aspartate: step 3/4. Catalyzes the condensation of (S)-aspartate-beta-semialdehyde [(S)-ASA] and pyruvate to 4-hydroxy-tetrahydrodipicolinate (HTPA). The sequence is that of 4-hydroxy-tetrahydrodipicolinate synthase from Actinobacillus pleuropneumoniae serotype 5b (strain L20).